Reading from the N-terminus, the 86-residue chain is Small nuclear ribonucleoprotein F (86 aa).

Position 2 is an N-acetylserine (serine 2). In terms of domain architecture, Sm spans 6–78 (NPKPFLNGLT…VLYIRGVEEE (73 aa)).

This sequence belongs to the snRNP Sm proteins family. SmF/LSm6 subfamily. As to quaternary structure, core component of the spliceosomal U1, U2, U4 and U5 small nuclear ribonucleoproteins (snRNPs), the building blocks of the spliceosome. Most spliceosomal snRNPs contain a common set of Sm proteins, SNRPB, SNRPD1, SNRPD2, SNRPD3, SNRPE, SNRPF and SNRPG that assemble in a heptameric protein ring on the Sm site of the small nuclear RNA to form the core snRNP. Component of the U1 snRNP. The U1 snRNP is composed of the U1 snRNA and the 7 core Sm proteins SNRPB, SNRPD1, SNRPD2, SNRPD3, SNRPE, SNRPF and SNRPG, and at least three U1 snRNP-specific proteins SNRNP70/U1-70K, SNRPA/U1-A and SNRPC/U1-C. Component of the U4/U6-U5 tri-snRNP complex composed of the U4, U6 and U5 snRNAs and at least PRPF3, PRPF4, PRPF6, PRPF8, PRPF31, SNRNP200, TXNL4A, SNRNP40, SNRPB, SNRPD1, SNRPD2, SNRPD3, SNRPE, SNRPF, SNRPG, DDX23, CD2BP2, PPIH, SNU13, EFTUD2, SART1 and USP39, plus LSM2, LSM3, LSM4, LSM5, LSM6, LSM7 and LSM8. Component of the U7 snRNP complex, or U7 Sm protein core complex, that is composed of the U7 snRNA and at least LSM10, LSM11, SNRPB, SNRPD3, SNRPE, SNRPF and SNRPG; the complex does not contain SNRPD1 and SNRPD2. Component of the minor spliceosome, which splices U12-type introns. Part of the SMN-Sm complex that contains SMN1, GEMIN2/SIP1, DDX20/GEMIN3, GEMIN4, GEMIN5, GEMIN6, GEMIN7, GEMIN8, STRAP/UNRIP and the Sm proteins SNRPB, SNRPD1, SNRPD2, SNRPD3, SNRPE, SNRPF and SNRPG; catalyzes core snRNPs assembly. Forms a 6S pICln-Sm complex composed of CLNS1A/pICln, SNRPD1, SNRPD2, SNRPE, SNRPF and SNRPG; ring-like structure where CLNS1A/pICln mimics additional Sm proteins and which is unable to assemble into the core snRNP. Interacts with GEMIN2 (via N-terminus); the interaction is direct. Interacts with SNRPD2; the interaction is direct. Interacts with SNRPE; the interaction is direct.

It is found in the cytoplasm. It localises to the cytosol. The protein resides in the nucleus. Plays a role in pre-mRNA splicing as a core component of the spliceosomal U1, U2, U4 and U5 small nuclear ribonucleoproteins (snRNPs), the building blocks of the spliceosome. Component of both the pre-catalytic spliceosome B complex and activated spliceosome C complexes. As a component of the minor spliceosome, involved in the splicing of U12-type introns in pre-mRNAs. As part of the U7 snRNP it is involved in histone 3'-end processing. In Homo sapiens (Human), this protein is Small nuclear ribonucleoprotein F (SNRPF).